The primary structure comprises 318 residues: Putative S-adenosyl-L-methionine-dependent methyltransferase MMAR_1595 (318 aa).

S-adenosyl-L-methionine contacts are provided by residues Glu132 and 161 to 162 (DL).

The protein belongs to the UPF0677 family.

Functionally, exhibits S-adenosyl-L-methionine-dependent methyltransferase activity. The chain is Putative S-adenosyl-L-methionine-dependent methyltransferase MMAR_1595 from Mycobacterium marinum (strain ATCC BAA-535 / M).